A 502-amino-acid chain; its full sequence is Probable cytochrome P450 6a23 (502 aa).

C445 contributes to the heme binding site.

The protein belongs to the cytochrome P450 family. Requires heme as cofactor.

It is found in the endoplasmic reticulum membrane. The protein resides in the microsome membrane. Its function is as follows. May be involved in the metabolism of insect hormones and in the breakdown of synthetic insecticides. The chain is Probable cytochrome P450 6a23 (Cyp6a23) from Drosophila melanogaster (Fruit fly).